A 403-amino-acid chain; its full sequence is F-box/kelch-repeat protein At5g43190 (403 aa).

The region spanning 45 to 91 (PNIWSNLPNHLLEHILSLLPFKTLLTLRSISRHLRSLILSPSFISDH) is the F-box domain. Kelch repeat units follow at residues 91 to 140 (HSFS…LLSS), 192 to 240 (KIFT…VFYN), 291 to 339 (ILYM…VCYH), and 343 to 393 (HVYC…FRWF).

The polypeptide is F-box/kelch-repeat protein At5g43190 (Arabidopsis thaliana (Mouse-ear cress)).